We begin with the raw amino-acid sequence, 89 residues long: Putative sodium channel toxin Ts30 (89 aa).

The first 17 residues, Met1 to Ala17, serve as a signal peptide directing secretion. An LCN-type CS-alpha/beta domain is found at Arg21 to His85. Cystine bridges form between Cys31/Cys84, Cys35/Cys59, Cys44/Cys64, and Cys48/Cys66.

In terms of tissue distribution, expressed by the venom gland.

It localises to the secreted. This chain is Putative sodium channel toxin Ts30, found in Tityus serrulatus (Brazilian scorpion).